Consider the following 306-residue polypeptide: tRNA dimethylallyltransferase (306 aa).

Residue 15-22 (GPTASGKS) participates in ATP binding. 17–22 (TASGKS) serves as a coordination point for substrate. The tract at residues 40–43 (DSMQ) is interaction with substrate tRNA.

The protein belongs to the IPP transferase family. As to quaternary structure, monomer. Mg(2+) serves as cofactor.

The enzyme catalyses adenosine(37) in tRNA + dimethylallyl diphosphate = N(6)-dimethylallyladenosine(37) in tRNA + diphosphate. Functionally, catalyzes the transfer of a dimethylallyl group onto the adenine at position 37 in tRNAs that read codons beginning with uridine, leading to the formation of N6-(dimethylallyl)adenosine (i(6)A). This Methylobacterium sp. (strain 4-46) protein is tRNA dimethylallyltransferase.